A 37-amino-acid polypeptide reads, in one-letter code: Large ribosomal subunit protein bL36 (37 aa).

It belongs to the bacterial ribosomal protein bL36 family.

The sequence is that of Large ribosomal subunit protein bL36 from Symbiobacterium thermophilum (strain DSM 24528 / JCM 14929 / IAM 14863 / T).